The sequence spans 330 residues: Zinc finger protein Gfi-1b (330 aa).

The segment at 1-20 (MPRSFLVKSKKAHTYHQPRA) is SNAG domain. 2 disordered regions span residues 1–21 (MPRS…PRAQ) and 75–99 (MASA…SESP). K8 is modified (N6,N6-dimethyllysine). The segment at 91–330 (GESPLSESPP…RHRESQHNLK (240 aa)) is interaction with ARIH2. C2H2-type zinc fingers lie at residues 163–186 (YHCV…RRSH), 192–214 (FACD…THVH), 220–242 (FECR…LLIH), 248–270 (YPCQ…TYIH), 276–298 (HKCQ…SRKH), and 304–327 (FSCE…ESQH). The segment at 164 to 330 (HCVKCNKVFS…RHRESQHNLK (167 aa)) is mediates interaction with GATA1.

In terms of assembly, interacts with histone methyltransferases EHMT2 and SUV39H1. Interacts with ARIH2 (via RING-type 2) and with RUNX1T1. Forms a complex with GATA1. Component of a RCOR-GFI-KDM1A-HDAC complex. Interacts directly with RCOR1, KDM1A and HDAC2. In terms of processing, methylation at Lys-8 in the SNAG domain seems required for the recruitment of the corepressor complex. As to expression, expressed in bone marrow and in spleen. Detected in hematopoietic stem cells, erythroblasts, and megakaryocytes. Expressed in thymocytes.

It localises to the nucleus. In terms of biological role, essential proto-oncogenic transcriptional regulator necessary for development and differentiation of erythroid and megakaryocytic lineages. Component of a RCOR-GFI-KDM1A-HDAC complex that suppresses, via histone deacetylase (HDAC) recruitment, a number of genes implicated in multilineage blood cell development and controls hematopoietic differentiation. Transcriptional repressor or activator depending on both promoter and cell type context; represses promoter activity of SOCS1 and SOCS3 and thus, may regulate cytokine signaling pathways. Cooperates with GATA1 to repress target gene transcription, such as the apoptosis regulator BCL2L1; GFI1B silencing in leukemic cell lines markedly increase apoptosis rate. Inhibits down-regulation of MYC and MYB as well as the cyclin-dependent kinase inhibitor CDKN1A/P21WAF1 in IL6-treated myelomonocytic cells. Represses expression of GATA3 in T-cell lymphomas and inhibits GATA1-mediated transcription; as GATA1 also mediates erythroid GFI1B transcription, both GATA1 and GFI1B participate in a feedback regulatory pathway controlling the expression of GFI1B gene in erythroid cells. Suppresses GATA1-mediated stimulation of GFI1B promoter through protein interaction. Binds to gamma-satellite DNA and to its own promoter, auto-repressing its own expression. Alters histone methylation by recruiting histone methyltransferase to target genes promoters. Plays a role in heterochromatin formation. In Mus musculus (Mouse), this protein is Zinc finger protein Gfi-1b (Gfi1b).